We begin with the raw amino-acid sequence, 441 residues long: ATP-dependent protease ATPase subunit HslU (441 aa).

ATP-binding positions include I18, 60-65, D254, E319, and R391; that span reads GVGKTE.

This sequence belongs to the ClpX chaperone family. HslU subfamily. In terms of assembly, a double ring-shaped homohexamer of HslV is capped on each side by a ring-shaped HslU homohexamer. The assembly of the HslU/HslV complex is dependent on binding of ATP.

Its subcellular location is the cytoplasm. ATPase subunit of a proteasome-like degradation complex; this subunit has chaperone activity. The binding of ATP and its subsequent hydrolysis by HslU are essential for unfolding of protein substrates subsequently hydrolyzed by HslV. HslU recognizes the N-terminal part of its protein substrates and unfolds these before they are guided to HslV for hydrolysis. In Shewanella pealeana (strain ATCC 700345 / ANG-SQ1), this protein is ATP-dependent protease ATPase subunit HslU.